Consider the following 522-residue polypeptide: MLVNILSKKPRAASVRWLGATVLFTLLTSPAWAFSIDDVAKQAQDLAGKGFEAPKSNLPSQFREMKFADYQQIQFNHDKAYWSKLKTPFKLEFYHQGMYFDTPVKINEVTSTTVKQIKYSPDYFNFGSVKHDPDSVKNLGFAGFKVIYPINSADKNDEIMSLLGASYFRVVGKGQVYGISARGLAIDTALPSGEEFPRFREFWVERPKQGDKHLVIYALLDSPRATGAYRFVVYPGRDTTVDVESKVFLRDKVGKLGMAPLTSMYLFGPNQPSPTLNYRPALHDSNGLSIHAGNGEWIWRPLNNPKHLSVSTYQVENPKGFGLLQRGRNFKDYEDLDDRYDLRPSAWIEPRGDWGKGKVELVEIPTADETNDNIVAFWTPDVLPDAKTPLALNYRLHFTRDEDKLHSQDIAYVSQTMRSTGDVKQSNLIREPDGSVAFLVDFVGPVLKGLDGATPVAAQVSIGDNGEMVENNVRYNPVTKGWRLTLRLKVKDDKKPVEMRAALVNGDKTLSETWSYQLPANE.

The first 33 residues, 1-33 (MLVNILSKKPRAASVRWLGATVLFTLLTSPAWA), serve as a signal peptide directing secretion.

Belongs to the OpgD/OpgG family.

Its subcellular location is the periplasm. Its pathway is glycan metabolism; osmoregulated periplasmic glucan (OPG) biosynthesis. Involved in the biosynthesis of osmoregulated periplasmic glucans (OPGs). The protein is Glucans biosynthesis protein G of Serratia proteamaculans (strain 568).